The chain runs to 369 residues: Histidinol-phosphate aminotransferase 2 (369 aa).

Lys231 bears the N6-(pyridoxal phosphate)lysine mark.

It belongs to the class-II pyridoxal-phosphate-dependent aminotransferase family. Histidinol-phosphate aminotransferase subfamily. Homodimer. Pyridoxal 5'-phosphate is required as a cofactor.

The enzyme catalyses L-histidinol phosphate + 2-oxoglutarate = 3-(imidazol-4-yl)-2-oxopropyl phosphate + L-glutamate. It participates in amino-acid biosynthesis; L-histidine biosynthesis; L-histidine from 5-phospho-alpha-D-ribose 1-diphosphate: step 7/9. The chain is Histidinol-phosphate aminotransferase 2 from Legionella pneumophila (strain Paris).